Reading from the N-terminus, the 973-residue chain is METKVHLFCQAEENIDLLDDGSNSFATDLSSGTINHKKYIKFSKTIEKEISPEIRSLSPEYKKIFETSIIFCGEEKSSDFSGEKKVGRKSLQVQQHSKRTEIIPPFLKLSKEKVTRKENSLCKLPNQYSVHKTSSPLCTSSAITREKEMLSNLYMTLYDEVTHGYLHSKELSALHKACKIFSKIRSGKIYVNDLPVILCILRISISDLEMRQALKTVDIDAFQDALKIFCRIKGGRVSTDDVFAVLDSMGIPINREILEEVTKHTYIDSNHMVDIGDIIFTLNELQEQYEDVSITEGSPLNEITSDRKLSSVAGCYLKYKKKNSLSSKLPEPSISKKLNKKSNQYYSKIMENDDLESKRPKNTWQIRKFLGGVGSSNVGVQEPYSKNGINFKKHSEKGEIHDSKSKPQSLKSSTSLSKSLDKSDISSIPKLQKPAVRKHSSLQKQVSSTEKTAISTLENFCEAISKLQENYIAAEELQSILPSTGINLLDEEFQKIVTDTSRNENGMVELDDFVNALAKERSFPECNALPGVIKAIDKIKDKNVDYEDLNTCLQNFGIYLSKPEFKKITELTEAGETKKVNFKEFIDTMMSNTECFSEKLVLPDAIETLDDLRKETMSVSDLWNTLSSLNSNLKKDEFLAALELVTVDEGDKVQFEEFAKVVRNMRDAARLEELQEVVLAADLLEGDMIAGKNLEDFLRNVGIKSPKEEVEKILQSDFVSEDNMVNIKDCMRALRDTQKFSNYIDFRKEASNLKLPKVNEIKEAANILSHVDNGKIGIPDLEHALKCLNVNLTEEDFNEALNCCNVSDNMEVDLKDFLMKMKESPHFQKSKATQILLATTQILQNDLVDVSDLKTLLMDKDLHTANAILTVMLRHVPEHESGKVSIQEFMTKLSDILTIPKAAGKFYLICTYCPDLERQAVVYMLKTIQDSIVKAQVSKKQYNMNIKQHKISLHNFCLNSKANIAKLNPNSKF.

The segment at 384–448 is disordered; the sequence is YSKNGINFKK…HSSLQKQVSS (65 aa). The span at 396 to 405 shows a compositional bias: basic and acidic residues; the sequence is EKGEIHDSKS. Residues 406–418 are compositionally biased toward low complexity; the sequence is KPQSLKSSTSLSK. 6 consecutive EF-hand domains span residues 488–523, 524–559, 633–668, 756–791, 792–827, and 864–899; these read LLDE…ERSF, PECN…FGIY, LKKD…MRDA, PKVN…LNVN, LTEE…SPHF, and TANA…ILTI.

The sequence is that of EF-hand calcium-binding domain-containing protein 13 (EFCAB13) from Homo sapiens (Human).